We begin with the raw amino-acid sequence, 492 residues long: Probable malate:quinone oxidoreductase 1 (492 aa).

The protein belongs to the MQO family. FAD is required as a cofactor.

It carries out the reaction (S)-malate + a quinone = a quinol + oxaloacetate. The protein operates within carbohydrate metabolism; tricarboxylic acid cycle; oxaloacetate from (S)-malate (quinone route): step 1/1. This Staphylococcus epidermidis (strain ATCC 12228 / FDA PCI 1200) protein is Probable malate:quinone oxidoreductase 1.